The primary structure comprises 338 residues: Glyceraldehyde-3-phosphate dehydrogenase (338 aa).

NAD(+) contacts are provided by residues 13–14 (RI), Asp35, and Arg80. D-glyceraldehyde 3-phosphate is bound by residues 151–153 (SCT), Thr182, 211–212 (TG), and Arg234. The active-site Nucleophile is the Cys152. Asn316 contacts NAD(+).

This sequence belongs to the glyceraldehyde-3-phosphate dehydrogenase family. As to quaternary structure, homotetramer.

It is found in the cytoplasm. It carries out the reaction D-glyceraldehyde 3-phosphate + phosphate + NAD(+) = (2R)-3-phospho-glyceroyl phosphate + NADH + H(+). The protein operates within carbohydrate degradation; glycolysis; pyruvate from D-glyceraldehyde 3-phosphate: step 1/5. The protein is Glyceraldehyde-3-phosphate dehydrogenase (GPD) of Sclerotinia sclerotiorum (White mold).